We begin with the raw amino-acid sequence, 418 residues long: Dwarfin sma-2 (418 aa).

Residues 8–134 (KKITERLKWK…YKRVHATGVL (127 aa)) enclose the MH1 domain. Cys-62, Cys-107, Cys-119, and His-124 together coordinate Zn(2+). The MH2 domain occupies 222–418 (WATVSYYELN…PTPRPISSIS (197 aa)).

It belongs to the dwarfin/SMAD family.

The protein resides in the cytoplasm. It is found in the nucleus. Involved in TGF-beta pathway. Plays a role in male tail tip morphogenesis. This chain is Dwarfin sma-2, found in Caenorhabditis elegans.